Reading from the N-terminus, the 463-residue chain is MGKEKNHVNVVVIGHVDSGKSTTTGHLIYKCGGIDKRTIEKFEKEAAELGKGSFKYAWVLDKLKAERERGITIDIALWKFETPKYYVTVIDAPGHRDFIKNMITGTSQADCAILIIAAGTGEFEAGISKDGQTREHALLAFTLGVRQLIVAINKMDTTKWSEQRFEIVKETSNFVKKVGYNPKSIAFVPISGWHGDNMLEESTNMGWFKGWTKETKAGVSKGKTLLDAIDAIEPPSRPTDKPLRLPLQDVYKIGGIGTVPVGRVETGTIKAGMVVTFAPANVTTEVKSVEMHHEQLEAGMPGDNVGFNVKNVSVKDIRRGNVCGDTKCDPPKEAASFVAQVIVLNHPGQIGNGYCPVLDCHTAHIACKFDTLQQKIDRRTGKALEEAPKFVKSGDACLVKMVPSKAMCVEPFADYPPLGRFAVRDMRQTVAVGVIKSVEKTDGKAGKVTKAAVKPVPRSSYAR.

N,N,N-trimethylglycine is present on Gly-2. Lys-3 is subject to N6,N6-dimethyllysine; alternate. An N6-methyllysine; alternate modification is found at Lys-3. Residues 5–239 (KNHVNVVVIG…DAIEPPSRPT (235 aa)) enclose the tr-type G domain. A G1 region spans residues 14-21 (GHVDSGKS). 14 to 21 (GHVDSGKS) lines the GTP pocket. Lys-30 carries the N6-methyllysine modification. A G2 region spans residues 70–74 (GITID). Residue Lys-79 is modified to N6,N6,N6-trimethyllysine. The G3 stretch occupies residues 91-94 (DAPG). GTP contacts are provided by residues 91 to 95 (DAPGH) and 153 to 156 (NKMD). The tract at residues 153-156 (NKMD) is G4. A G5 region spans residues 191–193 (SGW). Lys-315 is modified (N6,N6-dimethyllysine; alternate). The residue at position 315 (Lys-315) is an N6-methyllysine; alternate. An N6-methyllysine modification is found at Lys-389.

This sequence belongs to the TRAFAC class translation factor GTPase superfamily. Classic translation factor GTPase family. EF-Tu/EF-1A subfamily.

The protein localises to the cytoplasm. This protein promotes the GTP-dependent binding of aminoacyl-tRNA to the A-site of ribosomes during protein biosynthesis. This chain is Elongation factor 1-alpha (TEF), found in Puccinia graminis (Black stem rust fungus).